A 227-amino-acid chain; its full sequence is MTKNEYLIEKLQADLANHITELTSAYGEVTIECEVQNLLPVMIELRDREEFSFDQLIDLCGVDYLHYGDYDWETESATEHGFSRGVERQEAKAYAVNKPRFAVVYHLLSTKKNHRLRVKLFVEESHLIVPSVHHLWKSANWFEREAYDLYGILFDGHPDLRRLLTDYGFIGHPFRKDFPLSGEVEMRYDAKLQKVIYAPVDIVPRIVVPKVIRNDNRYIGNEGSKND.

The protein belongs to the complex I 30 kDa subunit family. NDH-1 is composed of 14 different subunits. Subunits NuoB, C, D, E, F, and G constitute the peripheral sector of the complex.

The protein resides in the cell inner membrane. The enzyme catalyses a quinone + NADH + 5 H(+)(in) = a quinol + NAD(+) + 4 H(+)(out). NDH-1 shuttles electrons from NADH, via FMN and iron-sulfur (Fe-S) centers, to quinones in the respiratory chain. The immediate electron acceptor for the enzyme in this species is believed to be ubiquinone. Couples the redox reaction to proton translocation (for every two electrons transferred, four hydrogen ions are translocated across the cytoplasmic membrane), and thus conserves the redox energy in a proton gradient. The chain is NADH-quinone oxidoreductase subunit C from Legionella pneumophila subsp. pneumophila (strain Philadelphia 1 / ATCC 33152 / DSM 7513).